Reading from the N-terminus, the 391-residue chain is Phosphoglycerate kinase (391 aa).

Substrate is bound by residues 21-23, Arg36, 59-62, Arg113, and Arg146; these read DLN and HLGR. Residues Lys197, Glu319, and 345–348 each bind ATP; that span reads GGDT.

Belongs to the phosphoglycerate kinase family. In terms of assembly, monomer.

The protein localises to the cytoplasm. It carries out the reaction (2R)-3-phosphoglycerate + ATP = (2R)-3-phospho-glyceroyl phosphate + ADP. Its pathway is carbohydrate degradation; glycolysis; pyruvate from D-glyceraldehyde 3-phosphate: step 2/5. The polypeptide is Phosphoglycerate kinase (Xanthomonas axonopodis pv. citri (strain 306)).